The primary structure comprises 247 residues: Protein GrpE (247 aa).

Over residues 31 to 49 (QKEETKTTNKDNQKEDETV) the composition is skewed to basic and acidic residues. A disordered region spans residues 31–79 (QKEETKTTNKDNQKEDETVKNQSNQSNQSNQTKQTNTKQQKHQPKENSH). A compositionally biased stretch (low complexity) spans 50–68 (KNQSNQSNQSNQTKQTNTK).

Belongs to the GrpE family. As to quaternary structure, homodimer.

Its subcellular location is the cytoplasm. In terms of biological role, participates actively in the response to hyperosmotic and heat shock by preventing the aggregation of stress-denatured proteins, in association with DnaK and GrpE. It is the nucleotide exchange factor for DnaK and may function as a thermosensor. Unfolded proteins bind initially to DnaJ; upon interaction with the DnaJ-bound protein, DnaK hydrolyzes its bound ATP, resulting in the formation of a stable complex. GrpE releases ADP from DnaK; ATP binding to DnaK triggers the release of the substrate protein, thus completing the reaction cycle. Several rounds of ATP-dependent interactions between DnaJ, DnaK and GrpE are required for fully efficient folding. The chain is Protein GrpE from Onion yellows phytoplasma (strain OY-M).